A 525-amino-acid chain; its full sequence is MKCNNHRILVIDFGSQYTQLLLRRIRELGVYSESCSWNISKSQVYAFNPNGIILSGGPYSVIDNDSPYIPEFVFQLGIPIFGICYGMQIMSFQLGGRVERVIAQREFGCTQVTILSKSVFINDIYDYVDDVTGRFALDVWMSHGDVVTTVPKDFTVIGVNKYRQVAMMANEDRHLYGVQFHPEVTHTKKGKSILERFITCICRCKSSWKIANIIDDIVMDTRVKVGNDKVVLGFSGGIDSLVTALLLRRAIGHQFICIYIDNGLLSNYEFDRIKNFCALNCNLDIIYLSQEQRFFNALIGVNDPEKKRKIIGRVFTEVFEEQIRNLVAVKWLAQGTIYSDVIESGVSLSSFKNVIKSHHNVGGFCGITDIQLLEPIRNLFKDEVRSIGLDLGIPYDIAYRHPFPGPGLAIRILGEVKKEYCDILRRVDFIFIEELKREHLYSKISQAFAVFLPTHSVGIQGDQRKYKWVIALRAVETIDFMTAHWAYLSYDFLNKVSNRIVNEVEEVSRVVYDISSKPPATIEWE.

Positions 7–207 constitute a Glutamine amidotransferase type-1 domain; sequence RILVIDFGSQ…ITCICRCKSS (201 aa). C84 acts as the Nucleophile in catalysis. Active-site residues include H181 and E183. The GMPS ATP-PPase domain occupies 208–400; that stretch reads WKIANIIDDI…LGIPYDIAYR (193 aa). Residue 235-241 participates in ATP binding; sequence SGGIDSL.

As to quaternary structure, homodimer.

The enzyme catalyses XMP + L-glutamine + ATP + H2O = GMP + L-glutamate + AMP + diphosphate + 2 H(+). It participates in purine metabolism; GMP biosynthesis; GMP from XMP (L-Gln route): step 1/1. In terms of biological role, catalyzes the synthesis of GMP from XMP. The chain is GMP synthase [glutamine-hydrolyzing] from Blochmanniella pennsylvanica (strain BPEN).